The primary structure comprises 680 residues: Oligopeptidase A (680 aa).

H469 is a binding site for Zn(2+). E470 is an active-site residue. The Zn(2+) site is built by H473 and H476.

The protein belongs to the peptidase M3 family. Requires Zn(2+) as cofactor.

It carries out the reaction Hydrolysis of oligopeptides, with broad specificity. Gly or Ala commonly occur as P1 or P1' residues, but more distant residues are also important, as is shown by the fact that Z-Gly-Pro-Gly-|-Gly-Pro-Ala is cleaved, but not Z-(Gly)(5).. Functionally, may play a specific role in the degradation of signal peptides after they are released from precursor forms of secreted proteins. Can cleave N-acetyl-L-Ala(4). In Escherichia coli (strain K12), this protein is Oligopeptidase A (prlC).